The following is a 173-amino-acid chain: ATP synthase subunit d, mitochondrial (173 aa).

The transit peptide at 1–23 directs the protein to the mitochondrion; sequence MAARSAALKIDWVKVTSSLGLRG.

It belongs to the ATPase d subunit family. In terms of assembly, F-type ATPases have 2 components, CF(1) - the catalytic core - and CF(0) - the membrane proton channel. In yeast, the dimeric form of ATP synthase consists of 17 polypeptides: alpha, beta, gamma, delta, epsilon, 4 (B), 5 (OSCP), 6 (A), 8, 9 (C), d, E (Tim11), f, g, h, i/j and k.

It localises to the mitochondrion inner membrane. Functionally, mitochondrial membrane ATP synthase (F(1)F(0) ATP synthase or Complex V) produces ATP from ADP in the presence of a proton gradient across the membrane which is generated by electron transport complexes of the respiratory chain. F-type ATPases consist of two structural domains, F(1) - containing the extramembraneous catalytic core, and F(0) - containing the membrane proton channel, linked together by a central stalk and a peripheral stalk. During catalysis, ATP synthesis in the catalytic domain of F(1) is coupled via a rotary mechanism of the central stalk subunits to proton translocation. Part of the complex F(0) domain and the peripheric stalk, which acts as a stator to hold the catalytic alpha(3)beta(3) subcomplex and subunit a/ATP6 static relative to the rotary elements. The protein is ATP synthase subunit d, mitochondrial (atp7) of Aspergillus terreus (strain NIH 2624 / FGSC A1156).